The sequence spans 777 residues: Hepatocyte growth factor-regulated tyrosine kinase substrate (777 aa).

The 129-residue stretch at 15–143 (ATSQLLLETD…IMKVEGHVFP (129 aa)) folds into the VHS domain. An FYVE-type zinc finger spans residues 160–220 (WVDAEECHRC…VCEPCFEQLN (61 aa)). The Zn(2+) site is built by C166, C169, C182, C185, C190, and C193. An N6-acetyllysine modification is found at K207. C212 and C215 together coordinate Zn(2+). Residues 223–319 (AEGKAASTTE…SPVNSSAPLA (97 aa)) are disordered. The segment at 225–541 (GKAASTTELP…QRLQEQEKER (317 aa)) is interaction with SNX1. The 20-residue stretch at 258 to 277 (QEEEELQLALALSQSEAEEK) folds into the UIM domain. Low complexity predominate over residues 292–311 (AEPTPVASSAPPASSLYSSP). A phosphotyrosine mark is found at Y308, Y329, and Y334. Residues 338–370 (KQEEARKSPTPSAPVPLTEPTAQPGEGHAIPAN) are disordered. The segment at 443–541 (SINTMHPQLL…QRLQEQEKER (99 aa)) is interaction with SNAP25 and TRAK2. The interval 452–570 (LELLNQLDER…FSLPYAQLQA (119 aa)) is interaction with STAM. The interval 478–777 (ARGALSALRE…GSEAQLISFD (300 aa)) is interaction with NF2. Position 549 is an N6-succinyllysine (K549). Residues 645–658 (AAAQGPAGPTTSPA) are compositionally biased toward low complexity. Disordered regions lie at residues 645–698 (AAAQ…YMGS) and 712–777 (NLMP…ISFD). Composition is skewed to polar residues over residues 659 to 698 (YSSY…YMGS) and 730 to 739 (PYISGQQPVY). Residues 753-777 (PPVAQQPPAQGPPAQGSEAQLISFD) show a composition bias toward low complexity.

As to quaternary structure, component of the ESCRT-0 complex composed of STAM or STAM2 and HGS. Part of a complex at least composed of HSG, STAM2 (or probably STAM) and EPS15. Interacts with STAM. Interacts with STAM2. Interacts with EPS15; the interaction is direct, calcium-dependent and inhibited by SNAP25. Identified in a complex with STAM and LITAF. Found in a complex with STAM and E3 ligase ITCH and DTX3L. Interacts with E3 ligase DTX3L; the interaction brings together STAM and HSG, promotes their recruitment to early endosomes and decreases STAM and HGS ubiquitination by ITCH. Interacts with NF2; the interaction is direct. Interacts with ubiquitin; the interaction is direct. Interacts with VPS37C. Interacts with SMAD1, SMAD2 and SMAD3. Interacts with TSG101; the interaction mediates the association with the ESCRT-I complex. Interacts with SNAP25; the interaction is direct and decreases with addition of increasing concentrations of free calcium. Interacts with SNX1; the interaction is direct. Component of a 550 kDa membrane complex at least composed of HGS and SNX1 but excluding EGFR. Interacts with TRAK1. Interacts with TRAK2. Component of the CART complex, at least composed of ACTN4, HGS/HRS, MYO5B and TRIM3. Interacts (via UIM domain) with UBQLN1 (via ubiquitin-like domain). Interacts with ARRDC3. Identified in a complex containing at least ARRDC4, AVPR2 and HGS. Interacts with LAPTM4B; promotes HGS ubiquitination. In terms of processing, phosphorylated on Tyr-334. A minor site of phosphorylation on Tyr-329 is detected. Phosphorylation occurs in response to EGF, IL-2, GM-CSF and HGF. Ubiquitinated by ITCH.

It is found in the cytoplasm. It localises to the early endosome membrane. The protein resides in the endosome. Its subcellular location is the multivesicular body membrane. In terms of biological role, involved in intracellular signal transduction mediated by cytokines and growth factors. When associated with STAM it suppresses DNA signaling upon stimulation by IL-2 and GM-CSF. Could be a direct effector of PI3-kinase in vesicular pathway via early endosomes and may regulate trafficking to early and late endosomes by recruiting clathrin. May concentrate ubiquitinated receptors within clathrin-coated regions. Involved in down-regulation of receptor tyrosine kinase via multivesicular body (MVBs) when complexed with STAM (ESCRT-0 complex). The ESCRT-0 complex binds ubiquitin and acts as a sorting machinery that recognizes ubiquitinated receptors and transfers them to further sequential lysosomal sorting/trafficking processes. May contribute to the efficient recruitment of SMADs to the activin receptor complex. Involved in receptor recycling via its association with the CART complex, a multiprotein complex required for efficient transferrin receptor recycling but not for EGFR degradation. The sequence is that of Hepatocyte growth factor-regulated tyrosine kinase substrate (HGS) from Bos taurus (Bovine).